Consider the following 812-residue polypeptide: Probable E3 ubiquitin-protein ligase hulA (812 aa).

Positions 1-109 constitute a C2 domain; sequence MTCSQPNLRV…QMGGDEMLTR (109 aa). Disordered stretches follow at residues 131 to 235 and 250 to 350; these read NLST…WERR and RTTT…YFVD. 4 stretches are compositionally biased toward polar residues: residues 148 to 165, 174 to 199, 214 to 223, and 250 to 267; these read MQPS…ASTP, ADPT…STIV, SRTNLSSFED, and RTTT…QTSR. Residues 226-259 enclose the WW 1 domain; the sequence is GRLPAGWERREDNLGRTYYVDHNTRTTTWTRPSN. Basic and acidic residues predominate over residues 276–291; sequence LERRAHQSRMLPEDRT. Over residues 292–306 the composition is skewed to polar residues; it reads GASSPNLQENQQQAQ. The segment covering 307-330 has biased composition (low complexity); it reads TPPAGGSASAVSMMATGATTAGTG. WW domains lie at 330–363 and 390–423; these read GELP…DPRR and GPLP…DPRL. The 334-residue stretch at 479–812 folds into the HECT domain; it reads SASDLKKRLM…VEETLGFGQE (334 aa). C780 functions as the Glycyl thioester intermediate in the catalytic mechanism.

It belongs to the RSP5/NEDD4 family. In terms of assembly, interacts with creD.

It is found in the cytoplasm. The enzyme catalyses S-ubiquitinyl-[E2 ubiquitin-conjugating enzyme]-L-cysteine + [acceptor protein]-L-lysine = [E2 ubiquitin-conjugating enzyme]-L-cysteine + N(6)-ubiquitinyl-[acceptor protein]-L-lysine.. It functions in the pathway protein modification; protein ubiquitination. Its function is as follows. E3 ubiquitin-protein ligase which accepts ubiquitin from an E2 ubiquitin-conjugating enzyme in the form of a thioester and then directly transfers the ubiquitin to targeted substrates. Probably involved in the regulatory network controlling carbon source utilization. The sequence is that of Probable E3 ubiquitin-protein ligase hulA (hulA) from Aspergillus flavus (strain ATCC 200026 / FGSC A1120 / IAM 13836 / NRRL 3357 / JCM 12722 / SRRC 167).